We begin with the raw amino-acid sequence, 828 residues long: Neurotrophin receptor-interacting factor 1 (828 aa).

Residues 14-85 (VKFEDVSLTF…QREIPQDTLP (72 aa)) form the KRAB 1 domain. A Glycyl lysine isopeptide (Lys-Gly) (interchain with G-Cter in ubiquitin) cross-link involves residue lysine 15. An SCAN box domain is found at 158–240 (RQKFRHFQYE…ALLENMTSVS (83 aa)). The 91-residue stretch at 280–370 (VTFQDVAVDF…ESILEDGVKE (91 aa)) folds into the KRAB 2 domain. Disordered stretches follow at residues 328 to 355 (RELTPDSPIPVVKPIHDPNTNDLSRNGT), 377 to 490 (NQVG…DPIT), and 575 to 611 (QKGYKEGNVQGNRNSWKHIKPHQKGSKGERVEELSTS). The segment covering 345-355 (PNTNDLSRNGT) has biased composition (polar residues). The span at 384-394 (EKGHPQKKFSE) shows a compositional bias: basic and acidic residues. The span at 418–433 (KYVKVKQKGTGKRKGR) shows a compositional bias: basic residues. The segment covering 458–478 (RSGSTPVTHGSSIKKQQQGSE) has biased composition (polar residues). Positions 589–599 (SWKHIKPHQKG) are enriched in basic residues. The segment covering 600 to 611 (SKGERVEELSTS) has biased composition (basic and acidic residues). 5 consecutive C2H2-type zinc fingers follow at residues 684 to 706 (CRCSECGKLFRNARYFSVHKKIH), 712 to 734 (YMCMACGKAFVQSSSLTQHLRIH), 740 to 762 (FECSECGRTFNDRSAISQHLRTH), 768 to 790 (YHCERCGKAFRQSSHLTRHERTH), and 796 to 818 (YVCIKCGKAFTQSSHLIGHQKTH).

The protein belongs to the krueppel C2H2-type zinc-finger protein family. Interacts with NGFR/p75(NTR). Interacts (via KRAB 1 domain) with TRAF6. Interacts (when ubiquitinated at Lys-15) with SQSTM1/p62. Post-translationally, ubiquitinated by TRAF6 at Lys-15 through 'Lys-63'-linked polyubiquitination. 'Lys-63'-linked polyubiquitination occurs in response to NGFR/p75(NTR) cleavage by gamma-secretase and promotes binding with the ICD cleavage product of NGFR/p75(NTR), followed by translocation into the nucleus and subsequent apoptosis. As to expression, ubiquitously expressed at low level. Expressed at higher level in testis.

The protein resides in the cytoplasm. Its subcellular location is the nucleus. In terms of biological role, transcription regulator involved in NGFR/p75(NTR)-mediated apoptosis. Essential component of the NGFR/p75(NTR) apoptotic pathway: upon ligand-binding and subsequent cleavage of NGFR/p75(NTR), binds to the intracellular domain (ICD) cleavage product of NGFR/p75(NTR), translocates to the nucleus and induces apoptosis, possibly by regulating expression of key regulators of apoptosis. Induces NGFR/p75(NTR)-mediated apoptosis in retina and sympathetic neurons. May also regulate expression of neuronal cholesterol biosynthesis genes. Probably acts as a transcription repressor: specifically binds to the 3'-end of zinc-finger coding genes and recruiting chromatin-modifying proteins such as SETDB1 and TRIM28/KAP1, leading to transcription repression. The protein is Neurotrophin receptor-interacting factor 1 (Nrif1) of Mus musculus (Mouse).